Consider the following 1194-residue polypeptide: DNA polymerase catalytic subunit (1194 aa).

This sequence belongs to the DNA polymerase type-B family. Forms a complex with the ssDNA-binding protein, the DNA polymerase processivity factor, and the alkaline exonuclease. Interacts with the helicase-primase complex composed of the primase, the helicase and the primase-associated factor; this interaction may coordinate leading and lagging strand DNA synthesis at the replication fork.

It is found in the host nucleus. The enzyme catalyses DNA(n) + a 2'-deoxyribonucleoside 5'-triphosphate = DNA(n+1) + diphosphate. It carries out the reaction Endonucleolytic cleavage to 5'-phosphomonoester.. Its function is as follows. Replicates viral genomic DNA. The replication complex is composed of six viral proteins: the DNA polymerase, processivity factor, primase, primase-associated factor, helicase, and ssDNA-binding protein. Additionally, the polymerase contains an intrinsic ribonuclease H (RNase H) activity that specifically degrades RNA/DNA heteroduplexes or duplex DNA substrates in the 5' to 3' direction. Therefore, it can catalyze the excision of the RNA primers that initiate the synthesis of Okazaki fragments at a replication fork during viral DNA replication. The chain is DNA polymerase catalytic subunit from Varicella-zoster virus (strain Dumas) (HHV-3).